A 146-amino-acid chain; its full sequence is MSTTTEVIAHHWAFAVFFVVAIGLCCLMLMGAFFLGGRARARAKHTPFESGIDSVGTARMRLSAKFYLVAMFFVIFDVEALYLYAWSVSIRESGWVGFIEAAIFILVLLAGLVYLVRIGALDWTPVRSRRQSKPGTIKNATNSHPQ.

Transmembrane regions (helical) follow at residues 14-34 (FAVF…GAFF), 66-86 (FYLV…LYAW), and 96-116 (VGFI…VYLV).

The protein belongs to the complex I subunit 3 family. NDH-1 is composed of 13 different subunits. Subunits NuoA, H, J, K, L, M, N constitute the membrane sector of the complex.

It localises to the cell inner membrane. It carries out the reaction a quinone + NADH + 5 H(+)(in) = a quinol + NAD(+) + 4 H(+)(out). Its function is as follows. NDH-1 shuttles electrons from NADH, via FMN and iron-sulfur (Fe-S) centers, to quinones in the respiratory chain. The immediate electron acceptor for the enzyme in this species is believed to be ubiquinone. Couples the redox reaction to proton translocation (for every two electrons transferred, four hydrogen ions are translocated across the cytoplasmic membrane), and thus conserves the redox energy in a proton gradient. In Serratia proteamaculans (strain 568), this protein is NADH-quinone oxidoreductase subunit A.